Consider the following 463-residue polypeptide: Chromosomal replication initiator protein DnaA (463 aa).

Residues 1–83 are domain I, interacts with DnaA modulators; the sequence is MSTNQIILTD…LQLFQHYNNT (83 aa). The domain II stretch occupies residues 83-124; it reads TIKSIEIITKELPGTTQTVTELPTKTFADIGSSELNSENIFS. The domain III, AAA+ region stretch occupies residues 125–343; sequence TLDARFTFDN…GALNKVIAHS (219 aa). Residues glycine 171, glycine 173, lysine 174, and threonine 175 each coordinate ATP. Residues 344–463 form a domain IV, binds dsDNA region; the sequence is NFTLKEITLE…INLLMKILQN (120 aa).

The protein belongs to the DnaA family. Oligomerizes as a right-handed, spiral filament on DNA at oriC.

The protein localises to the cytoplasm. Its function is as follows. Plays an essential role in the initiation and regulation of chromosomal replication. ATP-DnaA binds to the origin of replication (oriC) to initiate formation of the DNA replication initiation complex once per cell cycle. Binds the DnaA box (a 9 base pair repeat at the origin) and separates the double-stranded (ds)DNA. Forms a right-handed helical filament on oriC DNA; dsDNA binds to the exterior of the filament while single-stranded (ss)DNA is stabiized in the filament's interior. The ATP-DnaA-oriC complex binds and stabilizes one strand of the AT-rich DNA unwinding element (DUE), permitting loading of DNA polymerase. After initiation quickly degrades to an ADP-DnaA complex that is not apt for DNA replication. Binds acidic phospholipids. The protein is Chromosomal replication initiator protein DnaA of Rickettsia peacockii (strain Rustic).